A 160-amino-acid polypeptide reads, in one-letter code: Putative antiporter subunit mnhE2 (160 aa).

The next 3 membrane-spanning stretches (helical) occupy residues 22 to 42 (HFKF…IYIL), 55 to 75 (IWVA…SSIS), and 100 to 120 (SDWA…STVI).

This sequence belongs to the CPA3 antiporters (TC 2.A.63) subunit E family. In terms of assembly, may form a heterooligomeric complex that consists of seven subunits: mnhA2, mnhB2, mnhC2, mnhD2, mnhE2, mnhF2 and mnhG2.

It localises to the cell membrane. The protein is Putative antiporter subunit mnhE2 (mnhE2) of Staphylococcus aureus (strain Mu3 / ATCC 700698).